Reading from the N-terminus, the 592-residue chain is Protein US23 (592 aa).

The segment at 407 to 491 (PRSLGDGEEE…NNVVPNVDRR (85 aa)) is disordered. Acidic residues predominate over residues 460–481 (ADDEEQGEDDDDSGAEPMEPEE).

It belongs to the herpesviridae US22 family.

The protein localises to the virion tegument. In Homo sapiens (Human), this protein is Protein US23 (US23).